The sequence spans 299 residues: SET domain-containing protein 9 (299 aa).

The 174-residue stretch at 122–295 (FSVAQATSSL…QGEELFSNYY (174 aa)) folds into the SET domain. Tyr-294 provides a ligand contact to S-adenosyl-L-methionine.

This sequence belongs to the class V-like SAM-binding methyltransferase superfamily.

The chain is SET domain-containing protein 9 (SETD9) from Homo sapiens (Human).